Reading from the N-terminus, the 490-residue chain is Argininosuccinate lyase (490 aa).

Belongs to the lyase 1 family. Argininosuccinate lyase subfamily.

It localises to the cytoplasm. It carries out the reaction 2-(N(omega)-L-arginino)succinate = fumarate + L-arginine. It participates in amino-acid biosynthesis; L-arginine biosynthesis; L-arginine from L-ornithine and carbamoyl phosphate: step 3/3. In Bifidobacterium longum subsp. infantis (strain ATCC 15697 / DSM 20088 / JCM 1222 / NCTC 11817 / S12), this protein is Argininosuccinate lyase.